The primary structure comprises 185 residues: Small ribosomal subunit protein bS16 (185 aa).

The tract at residues 83–185 (QWTHGNNPEK…APASEETTEG (103 aa)) is disordered. Residues 89–125 (NPEKAKPGKKAQERDAERTQRDADRVAAEAQAKEDAK) show a composition bias toward basic and acidic residues. Low complexity-rich tracts occupy residues 126–146 (AAAAEAAEAAAAAAAEAAAAP) and 159–176 (VEAAAEEAPAAEAAAEEA).

It belongs to the bacterial ribosomal protein bS16 family.

The sequence is that of Small ribosomal subunit protein bS16 from Caulobacter sp. (strain K31).